Here is a 153-residue protein sequence, read N- to C-terminus: HSSWYNRLFSNSGTICYVGLVWVLALGAILPNLFVGSLRCDPRIFSCTFAQYVSSYYTIAVVIFHFFLPIGVVSYCYLRIWVLVLNIRHRVKPDRHLHHQTWPYNIHGFITMFVVFVLFAVCWGPLNIIGLTVAIYPPLGDSIPQWLFVASYF.

Residues H1 to S12 are Cytoplasmic-facing. A helical membrane pass occupies residues G13 to L33. The Extracellular segment spans residues F34–Y57. Residues T58–L78 form a helical membrane-spanning segment. Residues R79 to M112 lie on the Cytoplasmic side of the membrane. The helical transmembrane segment at F113–V133 threads the bilayer. The Extracellular segment spans residues A134–Q145. Residues W146–F153 form a helical membrane-spanning segment.

The protein belongs to the G-protein coupled receptor 1 family.

The protein localises to the cell membrane. Its function is as follows. High affinity receptor for melatonin. The activity of this receptor is mediated by pertussis toxin sensitive G proteins that inhibits adenylate cyclase activity. The protein is Melatonin receptor type 1A X2.0 of Xenopus laevis (African clawed frog).